The chain runs to 256 residues: Probable aquaporin TIP4-2 (256 aa).

5 consecutive transmembrane segments (helical) span residues 25–45, 59–79, 86–108, 146–166, and 178–198; these read AVAGELLFTFLFVFIGVASTI, AVTAAAMAQALVVAVLATAGF, LNPAVTLSLAVGGHITLFRSALY, GVAAEAVFTFTLLLVICATIL, and PLLTGLLVGANTVAGGALTGA. Residues 87-89 carry the NPA 1 motif; it reads NPA. The short motif at 201–203 is the NPA 2 element; sequence NPA. The chain crosses the membrane as a helical span at residues 220 to 240; the sequence is VYWVGPLAGGPLAVVAYELLF.

It belongs to the MIP/aquaporin (TC 1.A.8) family. TIP (TC 1.A.8.10) subfamily. As to expression, expressed in roots, leaves and anthers.

The protein resides in the vacuole membrane. Functionally, aquaporins facilitate the transport of water and small neutral solutes across cell membranes. May be involved in transport from the vacuolar compartment to the cytoplasm. The chain is Probable aquaporin TIP4-2 (TIP4-2) from Oryza sativa subsp. japonica (Rice).